We begin with the raw amino-acid sequence, 242 residues long: tRNA (guanine-N(1)-)-methyltransferase (242 aa).

S-adenosyl-L-methionine-binding positions include G109 and 129 to 134 (LGDFVL).

It belongs to the RNA methyltransferase TrmD family. As to quaternary structure, homodimer.

It localises to the cytoplasm. It catalyses the reaction guanosine(37) in tRNA + S-adenosyl-L-methionine = N(1)-methylguanosine(37) in tRNA + S-adenosyl-L-homocysteine + H(+). In terms of biological role, specifically methylates guanosine-37 in various tRNAs. This chain is tRNA (guanine-N(1)-)-methyltransferase, found in Exiguobacterium sibiricum (strain DSM 17290 / CCUG 55495 / CIP 109462 / JCM 13490 / 255-15).